A 575-amino-acid polypeptide reads, in one-letter code: DNA-directed RNA polymerase subunit beta' (575 aa).

It belongs to the RNA polymerase beta' chain family. As to quaternary structure, in plastids the minimal PEP RNA polymerase catalytic core is composed of four subunits: alpha, beta, beta', and beta''. When a (nuclear-encoded) sigma factor is associated with the core the holoenzyme is formed, which can initiate transcription.

It is found in the plastid. It localises to the apicoplast. The catalysed reaction is RNA(n) + a ribonucleoside 5'-triphosphate = RNA(n+1) + diphosphate. DNA-dependent RNA polymerase catalyzes the transcription of DNA into RNA using the four ribonucleoside triphosphates as substrates. This Plasmodium falciparum (isolate 3D7) protein is DNA-directed RNA polymerase subunit beta' (rpoC1).